Here is a 237-residue protein sequence, read N- to C-terminus: Speedy protein E4 (237 aa).

The segment at 1–61 (MASGQARPPF…KRKSEWSDES (61 aa)) is disordered.

Belongs to the Speedy/Ringo family. In terms of tissue distribution, predominantly expressed in testis.

The protein is Speedy protein E4 of Homo sapiens (Human).